Consider the following 278-residue polypeptide: HTH-type transcriptional regulator HdfR (278 aa).

Residues 1-58 form the HTH lysR-type domain; it reads MDTELLKTFLEVSRTRHFGRAAEALYLTQSAVSFRIRQLENQLGVNLFTRHRNNIRLT. A DNA-binding region (H-T-H motif) is located at residues 18 to 37; sequence FGRAAEALYLTQSAVSFRIR.

Belongs to the LysR transcriptional regulatory family.

Its function is as follows. Negatively regulates the transcription of the flagellar master operon flhDC by binding to the upstream region of the operon. This Salmonella newport (strain SL254) protein is HTH-type transcriptional regulator HdfR.